Here is a 256-residue protein sequence, read N- to C-terminus: Thiazole synthase (256 aa).

K96 functions as the Schiff-base intermediate with DXP in the catalytic mechanism. 1-deoxy-D-xylulose 5-phosphate-binding positions include G157, 183 to 184, and 205 to 206; these read AG and NT.

It belongs to the ThiG family. In terms of assembly, homotetramer. Forms heterodimers with either ThiH or ThiS.

The protein localises to the cytoplasm. The catalysed reaction is [ThiS sulfur-carrier protein]-C-terminal-Gly-aminoethanethioate + 2-iminoacetate + 1-deoxy-D-xylulose 5-phosphate = [ThiS sulfur-carrier protein]-C-terminal Gly-Gly + 2-[(2R,5Z)-2-carboxy-4-methylthiazol-5(2H)-ylidene]ethyl phosphate + 2 H2O + H(+). It participates in cofactor biosynthesis; thiamine diphosphate biosynthesis. In terms of biological role, catalyzes the rearrangement of 1-deoxy-D-xylulose 5-phosphate (DXP) to produce the thiazole phosphate moiety of thiamine. Sulfur is provided by the thiocarboxylate moiety of the carrier protein ThiS. In vitro, sulfur can be provided by H(2)S. This chain is Thiazole synthase, found in Bacillus cytotoxicus (strain DSM 22905 / CIP 110041 / 391-98 / NVH 391-98).